The following is a 226-amino-acid chain: Protein DEHYDRATION-INDUCED 19 (226 aa).

Positions Phe158–Ala208 are disordered. The segment covering Leu196–Arg205 has biased composition (basic and acidic residues).

The protein belongs to the Di19 family.

The chain is Protein DEHYDRATION-INDUCED 19 (DI19-1) from Oryza sativa subsp. japonica (Rice).